The following is a 216-amino-acid chain: Guanylate kinase (216 aa).

The region spanning 12–191 is the Guanylate kinase-like domain; that stretch reads GLLFVISSPS…CVKQVKNILT (180 aa). 19 to 26 contributes to the ATP binding site; that stretch reads SPSGAGKS.

This sequence belongs to the guanylate kinase family.

It localises to the cytoplasm. It catalyses the reaction GMP + ATP = GDP + ADP. In terms of biological role, essential for recycling GMP and indirectly, cGMP. In Zymomonas mobilis subsp. mobilis (strain ATCC 31821 / ZM4 / CP4), this protein is Guanylate kinase.